A 323-amino-acid chain; its full sequence is Mortality factor 4-like protein 1 (323 aa).

Residues 12–62 (QEGERVLCFHGPLLYEAKCVKVAIKDKQVKYFIHHSGWNKNWDEWVPESRV) form the Tudor-knot domain. Residues 76 to 143 (LQKANQEQYA…RKKRARVDPT (68 aa)) are disordered. Residues 94–227 (PGKKTSGLQQ…VAGIKEYFNV (134 aa)) form a sufficient for interaction with SIN3A region. Residues 96–107 (KKTSGLQQKNVD) carry the Nuclear localization signal motif. The residue at position 104 (K104) is an N6-acetyllysine. Residues 125–191 (STSETPQPPR…FYLPAKKNVD (67 aa)) form an interaction with RB1-1 region. Residues 149–303 (TFMNRVEVKV…FLKYLAKNSA (155 aa)) are sufficient for interaction with PHF12. The region spanning 152-323 (NRVEVKVKIP…APPEYHRKAV (172 aa)) is the MRG domain. Residues 284 to 305 (LALLLNYLHDFLKYLAKNSATL) are interaction with RB1-2.

In terms of assembly, component of the NuA4 histone acetyltransferase complex which contains the catalytic subunit KAT5/TIP60 and the subunits EP400, TRRAP/PAF400, BRD8/SMAP, EPC1, DMAP1/DNMAP1, RUVBL1/TIP49, RUVBL2, ING3, actin, ACTL6A/BAF53A, MORF4L1/MRG15, MORF4L2/MRGX, MRGBP, YEATS4/GAS41, VPS72/YL1 and MEAF6. The NuA4 complex interacts with MYC and the adenovirus E1A protein. MORF4L1 may also participate in the formation of NuA4 related complexes which lack the KAT5/TIP60 catalytic subunit, but which include the SWI/SNF related protein SRCAP. Component of the mSin3A histone deacetylase complex, which includes SIN3A, HDAC2, ARID4B, MORF4L1, RBBP4/RbAp48, and RBBP7/RbAp46. May also interact with PHF12 and one or more as yet undefined members of the TLE (transducin-like enhancer of split) family of transcriptional repressors. Component of the SIN3B complex, which includes SIN3B, HDAC2 or HDAC1, PHF12 and MORF4L1. Interacts with RB1 and KAT8. Interacts with the N-terminus of MRFAP1. Found in a complex composed of MORF4L1, MRFAP1 and RB1. Interacts with the entire BRCA complex, which contains BRCA1, PALB2, BRCA2 and RAD51. Interacts with PALB2. Forms a complex with MSL1 and NUPR1.

The protein localises to the nucleus. Component of the NuA4 histone acetyltransferase (HAT) complex which is involved in transcriptional activation of select genes principally by acetylation of nucleosomal histones H4 and H2A. This modification may both alter nucleosome - DNA interactions and promote interaction of the modified histones with other proteins which positively regulate transcription. This complex may be required for the activation of transcriptional programs associated with oncogene and proto-oncogene mediated growth induction, tumor suppressor mediated growth arrest and replicative senescence, apoptosis, and DNA repair. The NuA4 complex ATPase and helicase activities seem to be, at least in part, contributed by the association of RUVBL1 and RUVBL2 with EP400. NuA4 may also play a direct role in DNA repair when directly recruited to sites of DNA damage. As part of the SIN3B complex represses transcription and counteracts the histone acetyltransferase activity of EP300 through the recognition H3K27ac marks by PHF12 and the activity of the histone deacetylase HDAC2. SIN3B complex is recruited downstream of the constitutively active genes transcriptional start sites through interaction with histones and mitigates histone acetylation and RNA polymerase II progression within transcribed regions contributing to the regulation of transcription. Required for homologous recombination repair (HRR) and resistance to mitomycin C (MMC). Involved in the localization of PALB2, BRCA2 and RAD51, but not BRCA1, to DNA-damage foci. The sequence is that of Mortality factor 4-like protein 1 (MORF4L1) from Pongo abelii (Sumatran orangutan).